The chain runs to 481 residues: ATP synthase subunit beta (481 aa).

ATP is bound at residue 167 to 174 (GGAGVGKT).

Belongs to the ATPase alpha/beta chains family. F-type ATPases have 2 components, CF(1) - the catalytic core - and CF(0) - the membrane proton channel. CF(1) has five subunits: alpha(3), beta(3), gamma(1), delta(1), epsilon(1). CF(0) has three main subunits: a(1), b(2) and c(9-12). The alpha and beta chains form an alternating ring which encloses part of the gamma chain. CF(1) is attached to CF(0) by a central stalk formed by the gamma and epsilon chains, while a peripheral stalk is formed by the delta and b chains.

It is found in the cell membrane. It catalyses the reaction ATP + H2O + 4 H(+)(in) = ADP + phosphate + 5 H(+)(out). Its function is as follows. Produces ATP from ADP in the presence of a proton gradient across the membrane. The catalytic sites are hosted primarily by the beta subunits. The protein is ATP synthase subunit beta of Corynebacterium efficiens (strain DSM 44549 / YS-314 / AJ 12310 / JCM 11189 / NBRC 100395).